We begin with the raw amino-acid sequence, 316 residues long: Mycothiol acetyltransferase (316 aa).

N-acetyltransferase domains lie at 16 to 153 and 156 to 316; these read REVR…VPAV and VRIR…PAAN. Glu-36 contributes to the 1D-myo-inositol 2-(L-cysteinylamino)-2-deoxy-alpha-D-glucopyranoside binding site. Residues 83–85 and 91–96 contribute to the acetyl-CoA site; these read LVV and RRGIGS. 1D-myo-inositol 2-(L-cysteinylamino)-2-deoxy-alpha-D-glucopyranoside is bound by residues Glu-183, Lys-228, and Glu-238. Acetyl-CoA is bound by residues 242-244 and 249-255; these read VGV and QGRGLGQ. Tyr-283 is a binding site for 1D-myo-inositol 2-(L-cysteinylamino)-2-deoxy-alpha-D-glucopyranoside. 288–293 serves as a coordination point for acetyl-CoA; it reads NVAAVR.

Belongs to the acetyltransferase family. MshD subfamily. As to quaternary structure, monomer.

The enzyme catalyses 1D-myo-inositol 2-(L-cysteinylamino)-2-deoxy-alpha-D-glucopyranoside + acetyl-CoA = mycothiol + CoA + H(+). Catalyzes the transfer of acetyl from acetyl-CoA to desacetylmycothiol (Cys-GlcN-Ins) to form mycothiol. The sequence is that of Mycothiol acetyltransferase from Mycolicibacterium paratuberculosis (strain ATCC BAA-968 / K-10) (Mycobacterium paratuberculosis).